Consider the following 144-residue polypeptide: Transcriptional regulator SlyA (144 aa).

One can recognise an HTH marR-type domain in the interval 2–135 (ESPLGSDLAR…LITLIAKLEH (134 aa)). A DNA-binding region (H-T-H motif) is located at residues 49-72 (QIQLAKAIGIEQPSLVRTLDQLEE).

It belongs to the SlyA family. Homodimer.

Functionally, transcription regulator that can specifically activate or repress expression of target genes. In Shigella boydii serotype 18 (strain CDC 3083-94 / BS512), this protein is Transcriptional regulator SlyA.